The chain runs to 952 residues: Probable RNA-binding protein 19 (952 aa).

Residues 2 to 79 (SRLIVKNLPN…TRITVEFCKS (78 aa)) form the RRM 1 domain. Disordered stretches follow at residues 85–126 (KPRA…LEKL), 159–267 (KAKT…RGAV), and 367–395 (KQAPTARGPPKSTTPWQGRTLGENEEEED). Over residues 95–109 (KSSQPKQPSQDSVPS) the composition is skewed to low complexity. The span at 163–180 (KASSDYLNFDSDSNSDSG) shows a compositional bias: polar residues. Ser177, Ser179, and Ser183 each carry phosphoserine. 2 stretches are compositionally biased toward acidic residues: residues 181–196 (QESEEEPAREDPEEEQ) and 224–251 (SSEDEDEEDSEDEAVNCEEGSEEEEEEG). 2 RRM domains span residues 293-368 (YTVK…REKQ) and 400-478 (GRLF…PSTI). Lys479 is covalently cross-linked (Glycyl lysine isopeptide (Lys-Gly) (interchain with G-Cter in SUMO2)). Residues 481 to 504 (EASQEANAPGSSYKKKKEAMDKAN) are disordered. The region spanning 584–656 (TVILAKNLPA…VPLYLEWAPI (73 aa)) is the RRM 4 domain. Basic and acidic residues predominate over residues 664-679 (QKKDSQHEQPAEKAEV). The interval 664–719 (QKKDSQHEQPAEKAEVEQETVLDPEGEKASVEGAEASTGKMEEEEEEEEEEEEESI) is disordered. Ser693 is subject to Phosphoserine. A compositionally biased stretch (acidic residues) spans 705–718 (EEEEEEEEEEEEES). 2 consecutive RRM domains span residues 722–803 (CTLF…ISER) and 824–904 (SKIL…WADS). A phosphoserine mark is found at Ser928 and Ser944.

It belongs to the RRM MRD1 family. Expressed in the crypts of Lieberkuhn of the intestine (at protein level).

It localises to the nucleus. Its subcellular location is the nucleolus. It is found in the nucleoplasm. The protein resides in the cytoplasm. The protein localises to the chromosome. Functionally, plays a role in embryo pre-implantation development. The sequence is that of Probable RNA-binding protein 19 (Rbm19) from Mus musculus (Mouse).